A 510-amino-acid chain; its full sequence is Bifunctional pantoate ligase/cytidylate kinase (510 aa).

Residues 1–276 (MKKVIIRKTE…CGETRLIDHV (276 aa)) form a pantoate--beta-alanine ligase region. ATP is bound at residue 29-36 (MGNLHDGH). His36 serves as the catalytic Proton donor. Residue Gln61 coordinates (R)-pantoate. Gln61 is a binding site for beta-alanine. 150-153 (GEKD) lines the ATP pocket. Gln156 contacts (R)-pantoate. 187–190 (LSSR) serves as a coordination point for ATP. The tract at residues 277-510 (FLMKRRPIIA…DRIPKETEIK (234 aa)) is cytidylate kinase.

In the N-terminal section; belongs to the pantothenate synthetase family. The protein in the C-terminal section; belongs to the cytidylate kinase family. Type 1 subfamily.

The protein resides in the cytoplasm. It carries out the reaction (R)-pantoate + beta-alanine + ATP = (R)-pantothenate + AMP + diphosphate + H(+). The catalysed reaction is CMP + ATP = CDP + ADP. The enzyme catalyses dCMP + ATP = dCDP + ADP. Its pathway is cofactor biosynthesis; (R)-pantothenate biosynthesis; (R)-pantothenate from (R)-pantoate and beta-alanine: step 1/1. Its function is as follows. Catalyzes the condensation of pantoate with beta-alanine in an ATP-dependent reaction via a pantoyl-adenylate intermediate. Functionally, catalyzes the transfer of a phosphate group from ATP to either CMP or dCMP to form CDP or dCDP and ADP, respectively. This is Bifunctional pantoate ligase/cytidylate kinase from Prochlorococcus marinus (strain MIT 9301).